Consider the following 75-residue polypeptide: Probable protein BRICK1-B (75 aa).

A coiled-coil region spans residues 41–72 (MSCRSRLATLNEKLTTLERRIEYIEARVTKGE).

The protein belongs to the BRK1 family.

It is found in the cytoplasm. Its subcellular location is the cytoskeleton. Functionally, involved in regulation of actin and microtubule organization. Part of a WAVE complex that activates the Arp2/3 complex. The protein is Probable protein BRICK1-B (brk1-b) of Xenopus laevis (African clawed frog).